Consider the following 209-residue polypeptide: CASP-like protein 2A2 (209 aa).

The Cytoplasmic segment spans residues 1–37 (MSKTAGVGRLGGARAADAAQQQQLAAGDAAVARAARP). The chain crosses the membrane as a helical span at residues 38-58 (IETLLRAAPLVLCVAAMTLML). Topologically, residues 59-79 (RDQQSNEYGTVAYSDLGGFKY) are extracellular. A helical membrane pass occupies residues 80–100 (LVYANGLCAAYSLASAFYTAV). Over 101–109 (PRPATVSRS) the chain is Cytoplasmic. A helical membrane pass occupies residues 110–130 (WVVFLLDQVFTYLILAAGAAA). At 131-161 (AELLYLAYNGDKEVTWSEACGVFGSFCRQAR) the chain is on the extracellular side. The helical transmembrane segment at 162-182 (ISVAITFGAVLCFILLSLLSS) threads the bilayer. The Cytoplasmic segment spans residues 183–209 (YRLFSAYEAPPPSALGSKGVEIAAYPR).

Belongs to the Casparian strip membrane proteins (CASP) family. As to quaternary structure, homodimer and heterodimers.

The protein localises to the cell membrane. This is CASP-like protein 2A2 from Zea mays (Maize).